A 1242-amino-acid chain; its full sequence is Protein jagged-1a (1242 aa).

The N-terminal stretch at 1-28 is a signal peptide; that stretch reads MILRPSATFAALSAHVLLRCLWMRVCEA. Topologically, residues 29 to 1070 are extracellular; sequence SGHFEMQVLS…KQPQNPNVDY (1042 aa). N-linked (GlcNAc...) asparagine glycosylation is present at Asn-141. The DSL domain maps to 186-230; the sequence is VTCDEHYFGFGCNKFCRPRDDFFGHYTCDHNGNKTCLEGWAGPEC. 2 disulfide bridges follow: Cys-188/Cys-197 and Cys-201/Cys-213. Asn-218 carries an N-linked (GlcNAc...) asparagine glycan. Cystine bridges form between Cys-221/Cys-230, Cys-235/Cys-246, Cys-239/Cys-252, Cys-254/Cys-263, Cys-266/Cys-277, Cys-272/Cys-283, Cys-285/Cys-294, Cys-301/Cys-313, Cys-307/Cys-323, Cys-325/Cys-334, Cys-341/Cys-352, Cys-346/Cys-361, Cys-363/Cys-372, Cys-379/Cys-390, Cys-384/Cys-399, Cys-401/Cys-410, Cys-417/Cys-428, Cys-422/Cys-437, Cys-439/Cys-448, Cys-455/Cys-465, Cys-459/Cys-474, Cys-476/Cys-485, Cys-492/Cys-503, Cys-497/Cys-512, Cys-514/Cys-523, Cys-530/Cys-541, Cys-535/Cys-550, Cys-552/Cys-561, Cys-600/Cys-618, Cys-620/Cys-629, Cys-636/Cys-647, Cys-641/Cys-656, Cys-658/Cys-667, Cys-674/Cys-685, Cys-679/Cys-694, Cys-696/Cys-705, Cys-712/Cys-723, Cys-717/Cys-732, and Cys-734/Cys-743. The EGF-like 1 domain maps to 231 to 264; the sequence is NTAICKQGCSIEHGSCKVPGNCRCLYGWQGEYCD. The EGF-like 2; atypical domain maps to 265–295; it reads QCIPHPGCVHGTCIEPWQCLCDTNWGGQLCD. EGF-like domains lie at 297–335 and 337–373; these read DLNT…QNCE and ADNA…PSCN. One can recognise an EGF-like 5; calcium-binding domain in the interval 375–411; sequence NEDDCSPNPCNHSGVCVDLVDGFKCICPVQWTGKTCL. Asn-385 is a glycosylation site (N-linked (GlcNAc...) asparagine). The EGF-like 6; calcium-binding domain maps to 413-449; it reads DANECEESPCVNAHSCRNLIGGYFCECLPGWTGQNCD. In terms of domain architecture, EGF-like 7; calcium-binding spans 451–486; it reads NVNDCHGQCLNGGLCKDLVNGYRCVCAAGFAGDRCE. The 37-residue stretch at 488 to 524 folds into the EGF-like 8; calcium-binding domain; sequence DVDECASRPCLNGGRCQDTLNGFQCLCPPGFSGATCQ. EGF-like domains are found at residues 526–562 and 575–630; these read DLDY…KNCS and VIDS…TYCH. Asn-560 carries N-linked (GlcNAc...) asparagine glycosylation. The 37-residue stretch at 632–668 folds into the EGF-like 11; calcium-binding domain; the sequence is NINDCESSPCLSGGTCIDKINAYQCICADGWEGPNCE. The EGF-like 12; calcium-binding domain occupies 670 to 706; sequence NIDDCRTNPCRDRGVCRDLVNDFYCECENGWKGKTCH. 2 consecutive EGF-like domains span residues 708–744 and 747–783; these read RESQ…ATCN and KNSS…PTCS. Asn-748 is a glycosylation site (N-linked (GlcNAc...) asparagine). 9 cysteine pairs are disulfide-bonded: Cys-751/Cys-762, Cys-756/Cys-771, Cys-773/Cys-782, Cys-789/Cys-800, Cys-794/Cys-809, Cys-811/Cys-820, Cys-827/Cys-838, Cys-832/Cys-847, and Cys-849/Cys-858. Residues 785–821 enclose the EGF-like 15; calcium-binding domain; that stretch reads NSNDCNPQPCYNSGTCVDGDNWYRCECASGFAGPDCR. In terms of domain architecture, EGF-like 16; calcium-binding spans 823-859; sequence NINECQSSPCAFGSTCVDEINGYRCLCPPGRTGPRCQ. The 43-residue stretch at 917–959 folds into the EGF-like 17 domain; it reads TGQLCVPVRDEQCFVKPCSSQGECWSAHRPAVRTHCQPDSHCA. N-linked (GlcNAc...) asparagine glycosylation is found at Asn-960, Asn-991, and Asn-1046. The chain crosses the membrane as a helical span at residues 1071–1095; it reads MVPLLVSVVTAIWVLALASVFLWCI. Residues 1096–1242 lie on the Cytoplasmic side of the membrane; it reads RHHRKQSSSA…HSLQKMEYIV (147 aa). The disordered stretch occupies residues 1191-1242; that stretch reads RDDRLSSNGTDIKKHPQWTNKRDNRDLESQHRVPDSQHRDSQHSLQKMEYIV. Residues 1210–1232 show a composition bias toward basic and acidic residues; it reads NKRDNRDLESQHRVPDSQHRDSQ.

It is found in the membrane. It localises to the cell membrane. Ligand for multiple Notch receptors and involved in the mediation of Notch signaling. Seems to be involved in cell-fate decisions. The protein is Protein jagged-1a (jag1a) of Danio rerio (Zebrafish).